Here is a 258-residue protein sequence, read N- to C-terminus: uncharacterized protein (258 aa).

The signal sequence occupies residues 1-20 (MKCFQKLYIFILILIVLMAG). Residue Cys-21 is the site of N-palmitoyl cysteine attachment. Cys-21 carries the S-diacylglycerol cysteine lipid modification.

It belongs to the staphylococcal tandem lipoprotein family.

The protein localises to the cell membrane. This is an uncharacterized protein from Staphylococcus aureus (strain COL).